Consider the following 225-residue polypeptide: Lipoarabinomannan carrier protein LprG (225 aa).

An N-terminal signal peptide occupies residues 1–21 (MRNRIRLALIPVAVAAIALAG). C22 carries N-palmitoyl cysteine lipidation. A lipid anchor (S-diacylglycerol cysteine) is attached at C22.

This sequence belongs to the LppX/LprAFG lipoprotein family. Post-translationally, modified by Lgt on Cys-22 with an S-linked diacylglyceral, signal peptide is removed by LspA, Cys-22 is further modifed with a fatty acid on its amino group by Lnt yielding a triacylated protein.

It is found in the cell inner membrane. Functionally, helps membrane protein MAB_2807 (P55) transport triacylglycerides (TAG) across the inner cell membrane into the periplasm and probably ultimately to the outer membrane. Binds TAG in its hydrophobic cavity and transfers it between lipid bilayers. TAG probably regulates lipid metabolism and growth regulation and plays a structural role in the outer membrane. Also binds mannosides, lipoarabinomannan and lipomannan and various glycolipids in the same cavity. The polypeptide is Lipoarabinomannan carrier protein LprG (Mycobacteroides abscessus (strain ATCC 19977 / DSM 44196 / CCUG 20993 / CIP 104536 / JCM 13569 / NCTC 13031 / TMC 1543 / L948) (Mycobacterium abscessus)).